Reading from the N-terminus, the 141-residue chain is Flagellar assembly factor FliW 1 (141 aa).

It belongs to the FliW family. In terms of assembly, interacts with translational regulator CsrA and flagellin(s).

Its subcellular location is the cytoplasm. In terms of biological role, acts as an anti-CsrA protein, binds CsrA and prevents it from repressing translation of its target genes, one of which is flagellin. Binds to flagellin and participates in the assembly of the flagellum. This is Flagellar assembly factor FliW 1 from Desulfotalea psychrophila (strain LSv54 / DSM 12343).